The primary structure comprises 386 residues: Oxysterol-binding protein-related protein 4A (386 aa).

It belongs to the OSBP family. In terms of tissue distribution, expressed in roots, stems and flowers.

Functionally, may be involved in the transport of sterols. The protein is Oxysterol-binding protein-related protein 4A (ORP4A) of Arabidopsis thaliana (Mouse-ear cress).